The following is a 197-amino-acid chain: Imidazoleglycerol-phosphate dehydratase (197 aa).

The protein belongs to the imidazoleglycerol-phosphate dehydratase family.

It is found in the cytoplasm. It catalyses the reaction D-erythro-1-(imidazol-4-yl)glycerol 3-phosphate = 3-(imidazol-4-yl)-2-oxopropyl phosphate + H2O. Its pathway is amino-acid biosynthesis; L-histidine biosynthesis; L-histidine from 5-phospho-alpha-D-ribose 1-diphosphate: step 6/9. In Marinobacter nauticus (strain ATCC 700491 / DSM 11845 / VT8) (Marinobacter aquaeolei), this protein is Imidazoleglycerol-phosphate dehydratase.